The sequence spans 339 residues: MYNVAIVGASGYTGGELLRMLLNHSEVEVNNITSRKYDGTPAHKIHPHIRDSGLVFKNKQPSELDADIIFTATPHGASMKIVPDLLETGTKVIDLSGDYRYRDTKVYEKWYGLEHTSDIKGVYGLPEIYRDEIKKADLVGNPGCFPTGAILSSYPLVDNDLVDRIVIDSKTGVSGAGVNPSSTTHYPNIADNVNPYKISSHRHVSEIQQELHGFEDVKVSFTPHLVPVIRGIQTTSHSFLREEHSDITPDELRKFYEKTYGKEYFIKLMDDGEIPHLSSVRGSNFVHIGGFEIDDTGRIVMLSCIDNLVRGASGQAIQNMNIMLGLDETTGLNHFGLNP.

Cys-144 is a catalytic residue.

The protein belongs to the NAGSA dehydrogenase family. Type 1 subfamily.

Its subcellular location is the cytoplasm. The enzyme catalyses N-acetyl-L-glutamate 5-semialdehyde + phosphate + NADP(+) = N-acetyl-L-glutamyl 5-phosphate + NADPH + H(+). The protein operates within amino-acid biosynthesis; L-arginine biosynthesis; N(2)-acetyl-L-ornithine from L-glutamate: step 3/4. Its function is as follows. Catalyzes the NADPH-dependent reduction of N-acetyl-5-glutamyl phosphate to yield N-acetyl-L-glutamate 5-semialdehyde. This Methanobrevibacter smithii (strain ATCC 35061 / DSM 861 / OCM 144 / PS) protein is N-acetyl-gamma-glutamyl-phosphate reductase.